The following is a 471-amino-acid chain: 7-dehydrocholesterol reductase (471 aa).

8 helical membrane passes run 36–56 (LVSV…FIMA), 95–115 (LYAL…DFCH), 144–164 (LQAW…LSWF), 173–193 (WIPL…FAMI), 233–253 (LFFN…SFAA), 262–282 (VTNS…DFFW), 302–322 (LGWG…LYLV), and 327–347 (QLST…YYIF). NADP(+) is bound by residues lysine 354, arginine 358, leucine 391, tryptophan 396, and 403 to 404 (NY). A helical membrane pass occupies residues 416–436 (LACGGGHLLPYFYIIYMTILL). NADP(+)-binding positions include aspartate 443, 447-451 (CANKY), and tyrosine 458.

It belongs to the ERG4/ERG24 family. As to quaternary structure, interacts with DHCR24; this interaction regulates DHCR7 activity. Interacts with TMEM147. In terms of tissue distribution, highest expression is detected in liver, followed by kidney and brain.

It is found in the endoplasmic reticulum membrane. It carries out the reaction cholesterol + NADP(+) = 7-dehydrocholesterol + NADPH + H(+). The enzyme catalyses 7-dehydrodesmosterol + NADPH + H(+) = desmosterol + NADP(+). It catalyses the reaction 5,6alpha-epoxy-5alpha-cholestan-3beta-ol + H2O = 5alpha-cholestane-3beta,5,6beta-triol. The catalysed reaction is 5,6beta-epoxy-5beta-cholestan-3beta-ol + H2O = 5alpha-cholestane-3beta,5,6beta-triol. Its pathway is steroid biosynthesis; cholesterol biosynthesis. Functionally, oxidoreductase that catalyzes the last step of the cholesterol synthesis pathway, which transforms cholesta-5,7-dien-3beta-ol (7-dehydrocholesterol,7-DHC) into cholesterol by reducing the C7-C8 double bond of its sterol core. Can also metabolize cholesta-5,7,24-trien-3beta-ol (7-dehydrodemosterol, 7-DHD) to desmosterol, which is then metabolized by the Delta(24)-sterol reductase (DHCR24) to cholesterol. Modulates ferroptosis (a form of regulated cell death driven by iron-dependent lipid peroxidation) through the metabolic breakdown of the anti-ferroptotic metabolites 7-DHC and 7-DHD which, when accumulated, divert the propagation of peroxyl radical-mediated damage from phospholipid components to its sterol core, protecting plasma and mitochondrial membranes from phospholipid autoxidation. Component of the microsomal antiestrogen binding site (AEBS), a multiproteic complex at the ER membrane that consists of an association between cholestenol Delta-isomerase/EBP and DHCR7. This complex is responsible for cholesterol-5,6-epoxide hydrolase (ChEH) activity, which consists in the hydration of cholesterol-5,6-epoxides (5,6-EC) into cholestane-3beta,5alpha,6beta-triol (CT). The precise role of each component of this complex has not been described yet. The sequence is that of 7-dehydrocholesterol reductase (Dhcr7) from Rattus norvegicus (Rat).